Here is a 63-residue protein sequence, read N- to C-terminus: Lantipeptide Flvbeta.a (63 aa).

Residues 1–28 (MSEKNMEKAGVVKADELDEMIDETTGGA) constitute a propeptide, cleaved by FlvT. Residues T30, T33, T38, and T39 each carry the 2,3-didehydrobutyrine; by FlvM2 modification. The lanthionine (Ser-Cys); by FlvM2 cross-link spans 43 to 49 (SKGLQNC). 2 positions are modified to 2,3-didehydrobutyrine; by FlvM2: T54 and T55.

Maturation of FlvA2 peptides involves the enzymatic conversion of Thr, and Ser into dehydrated AA and the formation of thioether bonds with cysteines. Modifications are processed by the flavecin synthetase FlvM2. This is followed by membrane translocation and cleavage of the modified precursor. Post-translationally, contains DL-lanthionine, when coepressed in E.coli with the flavecin synthetase FlvM2.

It localises to the secreted. Its function is as follows. Lanthionine-containing peptide that does probably not show antibacterial activity, since its analog [+3]Flvbeta.a does not show antibacterial activity against M.luteus. Also does not show antibiotic activity when tested with [Del2]Flvalpha.a, an analog of Flvalpha.a, which is encoded by the same operon than Flvbeta.a. The bactericidal activity of lantibiotics is based on depolarization of energized bacterial cytoplasmic membranes, initiated by the formation of aqueous transmembrane pores. The polypeptide is Lantipeptide Flvbeta.a (Ruminococcus flavefaciens).